Here is a 502-residue protein sequence, read N- to C-terminus: Acetyl-coenzyme A carboxylase carboxyl transferase subunit beta, chloroplastic (502 aa).

Positions 191 to 202 (GSDSESSSIRTS) are enriched in low complexity. Residues 191 to 212 (GSDSESSSIRTSGNDSNFNVRE) are disordered. The region spanning 226–497 (LWVQCENCYE…NQNSSGARGS (272 aa)) is the CoA carboxyltransferase N-terminal domain. Zn(2+)-binding residues include cysteine 230, cysteine 233, cysteine 249, and cysteine 252. A C4-type zinc finger spans residues 230–252 (CENCYELNYRSFFRSKMNICEQC).

This sequence belongs to the AccD/PCCB family. In terms of assembly, acetyl-CoA carboxylase is a heterohexamer composed of biotin carboxyl carrier protein, biotin carboxylase and 2 subunits each of ACCase subunit alpha and ACCase plastid-coded subunit beta (accD). The cofactor is Zn(2+).

It localises to the plastid. It is found in the chloroplast stroma. The enzyme catalyses N(6)-carboxybiotinyl-L-lysyl-[protein] + acetyl-CoA = N(6)-biotinyl-L-lysyl-[protein] + malonyl-CoA. The protein operates within lipid metabolism; malonyl-CoA biosynthesis; malonyl-CoA from acetyl-CoA: step 1/1. Its function is as follows. Component of the acetyl coenzyme A carboxylase (ACC) complex. Biotin carboxylase (BC) catalyzes the carboxylation of biotin on its carrier protein (BCCP) and then the CO(2) group is transferred by the transcarboxylase to acetyl-CoA to form malonyl-CoA. The sequence is that of Acetyl-coenzyme A carboxylase carboxyl transferase subunit beta, chloroplastic from Chloranthus spicatus (Chulantree).